The sequence spans 244 residues: Mono-ADP-ribosyltransferase C3 (244 aa).

The first 40 residues, 1-40 (MKGIRKSILCLVLSAGVIAPVTTSIVQSPQKCYACTVDKG), serve as a signal peptide directing secretion. In terms of domain architecture, TR mART core spans 44–244 (DTFTEFTNVE…QIMITAMIFK (201 aa)). NAD(+) is bound by residues T80, N87, R91, 128-131 (RGDD), and 167-169 (RTE). Residue R128 is part of the active site. The active site involves S174. NAD(+)-binding positions include 182–185 (FGGR) and 211–213 (QLE). E213 is a catalytic residue.

It to exoenzymes 3 of C.limosum and C.botulinum D phage, and to S.aureus ediN. In terms of assembly, monomer.

It is found in the secreted. It catalyses the reaction L-asparaginyl-[protein] + NAD(+) = N(4)-(ADP-D-ribosyl)-L-asparaginyl-[protein] + nicotinamide + H(+). In terms of biological role, ADP-ribosylates eukaryotic Rho and Rac proteins on an asparagine residue. This chain is Mono-ADP-ribosyltransferase C3, found in Clostridium botulinum C phage (Clostridium botulinum C bacteriophage).